Consider the following 305-residue polypeptide: Protein-methionine-sulfoxide reductase catalytic subunit MsrP (305 aa).

The segment at residues 1 to 54 (MLIRKPADHLPSEITSESVYFNRRQFMAGAAGLLLSAETLAGLAAKKSPLSQLA) is a signal peptide (tat-type signal). Mo-molybdopterin contacts are provided by residues asparagine 69, 72–73 (YE), cysteine 126, threonine 161, asparagine 209, arginine 214, and 225–227 (SIK).

It belongs to the MsrP family. In terms of assembly, heterodimer of a catalytic subunit (MsrP) and a heme-binding subunit (MsrQ). Mo-molybdopterin is required as a cofactor. Predicted to be exported by the Tat system. The position of the signal peptide cleavage has not been experimentally proven.

It localises to the periplasm. The enzyme catalyses L-methionyl-[protein] + a quinone + H2O = L-methionyl-(S)-S-oxide-[protein] + a quinol. It carries out the reaction L-methionyl-[protein] + a quinone + H2O = L-methionyl-(R)-S-oxide-[protein] + a quinol. Part of the MsrPQ system that repairs oxidized periplasmic proteins containing methionine sulfoxide residues (Met-O), using respiratory chain electrons. Thus protects these proteins from oxidative-stress damage caused by reactive species of oxygen and chlorine generated by the host defense mechanisms. MsrPQ is essential for the maintenance of envelope integrity under bleach stress, rescuing a wide series of structurally unrelated periplasmic proteins from methionine oxidation. The catalytic subunit MsrP is non-stereospecific, being able to reduce both (R-) and (S-) diastereoisomers of methionine sulfoxide. The chain is Protein-methionine-sulfoxide reductase catalytic subunit MsrP from Chromobacterium violaceum (strain ATCC 12472 / DSM 30191 / JCM 1249 / CCUG 213 / NBRC 12614 / NCIMB 9131 / NCTC 9757 / MK).